We begin with the raw amino-acid sequence, 332 residues long: Autoinducer 2 import system permease protein LsrD (332 aa).

10 helical membrane-spanning segments follow: residues Tyr7–Ile27, Ile45–Ile65, Thr70–Leu90, Ala91–Ile111, Leu118–Met138, Phe162–Leu182, Val216–Gly236, Ser240–Asn260, Ile261–Leu281, and Ala288–Val308.

This sequence belongs to the binding-protein-dependent transport system permease family. AraH/RbsC subfamily. The complex is composed of two ATP-binding proteins (LsrA), two transmembrane proteins (LsrC and LsrD) and a solute-binding protein (LsrB).

Its subcellular location is the cell inner membrane. Functionally, part of the ABC transporter complex LsrABCD involved in autoinducer 2 (AI-2) import. Probably responsible for the translocation of the substrate across the membrane. The sequence is that of Autoinducer 2 import system permease protein LsrD (lsrD) from Salmonella paratyphi A (strain ATCC 9150 / SARB42).